The primary structure comprises 547 residues: Cytochrome P450 monooxygenase 81 (547 aa).

A run of 2 helical transmembrane segments spans residues 6–23 and 106–124; these read IPTQLGIAGAVAVLLFLL and AFFAMTYLLFGPGLLATAG. Residue Cys483 coordinates heme. Asn503 and Asn516 each carry an N-linked (GlcNAc...) asparagine glycan.

This sequence belongs to the cytochrome P450 family. Heme serves as cofactor.

The protein resides in the membrane. The protein operates within secondary metabolite biosynthesis. Functionally, cytochrome P450 monooxygenase that is able to use dehydroabietic acid as a substrate for oxidation. The polypeptide is Cytochrome P450 monooxygenase 81 (Postia placenta (strain ATCC 44394 / Madison 698-R) (Brown rot fungus)).